The primary structure comprises 422 residues: Inhibitor of growth protein 1 (422 aa).

The tract at residues 261–349 (ELGDTAGNSG…EASPADLPID (89 aa)) is disordered. Lysine 278 participates in a covalent cross-link: Glycyl lysine isopeptide (Lys-Gly) (interchain with G-Cter in SUMO2). The segment covering 297 to 314 (RNNENRENASSNHDHDDG) has biased composition (basic and acidic residues). Basic residues predominate over residues 322–334 (KKAKTSKKKKRSK). A PHD-type zinc finger spans residues 353–402 (PTYCLCNQVSYGEMIGCDNDECPIEWFHFSCVGLNHKPKGKWYCPKCRGE). Residues cysteine 356, cysteine 358, cysteine 369, cysteine 374, histidine 380, cysteine 383, cysteine 396, and cysteine 399 each coordinate Zn(2+). A PBR region spans residues 405–422 (KTMDKALEKSKKERAYNR).

It belongs to the ING family. Interacts with H3K4me3 and to a lesser extent with H3K4me2. Interacts with TP53. Isoform 2 interacts with RSL1D1. In terms of tissue distribution, isoform 2 was expressed in all normal tissues and cells examined, as well as in all breast cancer and melanoma cell lines examined. Isoform 3 was expressed in testis, liver, and kidney, weakly expressed in colon and brain and not expressed in breast and cultured melanocytes. Isoform 4 was highly expressed in testis and weakly expressed in brain, but not expressed in breast, colon, kidney, melanocytes, breast cancer or melanoma cell lines.

The protein resides in the nucleus. Cooperates with p53/TP53 in the negative regulatory pathway of cell growth by modulating p53-dependent transcriptional activation. Implicated as a tumor suppressor gene. The sequence is that of Inhibitor of growth protein 1 (ING1) from Homo sapiens (Human).